The chain runs to 274 residues: Penicillin-insensitive murein endopeptidase (274 aa).

Residues 1-19 (MNKTAIALLALLASSASLA) form the signal peptide. 3 disulfides stabilise this stretch: C44-C265, C187-C235, and C216-C223. Zn(2+) contacts are provided by H110, H113, D120, D147, H150, and H211. A disordered region spans residues 227 to 274 (PLPPPGDGCGAELQSWFEPPKPGTTKPEKKTPPPLPPSCQALLDEHVI).

Belongs to the peptidase M74 family. Dimer. Zn(2+) is required as a cofactor.

Its subcellular location is the periplasm. Functionally, murein endopeptidase that cleaves the D-alanyl-meso-2,6-diamino-pimelyl amide bond that connects peptidoglycan strands. Likely plays a role in the removal of murein from the sacculus. The chain is Penicillin-insensitive murein endopeptidase from Escherichia coli (strain SE11).